Here is a 341-residue protein sequence, read N- to C-terminus: Ketol-acid reductoisomerase (NADP(+)) (341 aa).

Residues 2 to 181 (AKVYYNGDAN…GATRAGVLET (180 aa)) form the KARI N-terminal Rossmann domain. NADP(+) contacts are provided by residues 25–28 (YGSQ), Arg48, Ser52, and 82–85 (DEKQ). His107 is a catalytic residue. An NADP(+)-binding site is contributed by Gly133. Positions 182–327 (TFKEETETDL…RELRSMMPFV (146 aa)) constitute a KARI C-terminal knotted domain. Mg(2+)-binding residues include Asp190, Glu194, Glu226, and Glu230. Ser251 contacts substrate.

The protein belongs to the ketol-acid reductoisomerase family. Mg(2+) serves as cofactor.

It catalyses the reaction (2R)-2,3-dihydroxy-3-methylbutanoate + NADP(+) = (2S)-2-acetolactate + NADPH + H(+). The catalysed reaction is (2R,3R)-2,3-dihydroxy-3-methylpentanoate + NADP(+) = (S)-2-ethyl-2-hydroxy-3-oxobutanoate + NADPH + H(+). It participates in amino-acid biosynthesis; L-isoleucine biosynthesis; L-isoleucine from 2-oxobutanoate: step 2/4. The protein operates within amino-acid biosynthesis; L-valine biosynthesis; L-valine from pyruvate: step 2/4. In terms of biological role, involved in the biosynthesis of branched-chain amino acids (BCAA). Catalyzes an alkyl-migration followed by a ketol-acid reduction of (S)-2-acetolactate (S2AL) to yield (R)-2,3-dihydroxy-isovalerate. In the isomerase reaction, S2AL is rearranged via a Mg-dependent methyl migration to produce 3-hydroxy-3-methyl-2-ketobutyrate (HMKB). In the reductase reaction, this 2-ketoacid undergoes a metal-dependent reduction by NADPH to yield (R)-2,3-dihydroxy-isovalerate. The chain is Ketol-acid reductoisomerase (NADP(+)) from Geobacillus sp. (strain WCH70).